Consider the following 220-residue polypeptide: Nodulin-23 (220 aa).

An N-terminal signal peptide occupies residues 1 to 17 (MRVIVITVFLFIGAAIA). The disordered stretch occupies residues 99-120 (PSEVFPRKNNPQGGRKSKLDDH).

It belongs to the nodulin 20 family.

This is Nodulin-23 from Glycine max (Soybean).